The chain runs to 207 residues: MAEYTLPDLDWDYAALEPHISGQINEIHHTKHHATYVKGVNDALAKLEEARANEDHAAIFLNEKNLAFHLGGHVNHSIWWKNLSPDGGDKPTGELAAAIDDAFGSFDKFRAQFSAAANGLQGSGWAVLGYDTLGSRLLTFQLYDQQANVPLGIIPLLQVDMWEHAFYLQYKNVKADYVKAFWNVVNWADVQKRYAAATSKAQGLIFG.

Positions 28, 76, 160, and 164 each coordinate Mn(2+).

This sequence belongs to the iron/manganese superoxide dismutase family. It depends on Mn(2+) as a cofactor.

It carries out the reaction 2 superoxide + 2 H(+) = H2O2 + O2. Its function is as follows. Destroys superoxide anion radicals which are normally produced within the cells and which are toxic to biological systems. The chain is Superoxide dismutase [Mn] (sodA) from Mycobacterium avium.